Consider the following 203-residue polypeptide: Glycerol-3-phosphate acyltransferase (203 aa).

4 consecutive transmembrane segments (helical) span residues 6-26 (LTLLMIVAAYLAGSVSSAVLV), 82-102 (AISLGLIAIAACLGHIYPIFF), 118-138 (APIGDDLAICLMASWVVLVLI), and 141-161 (YSSLAAIITALLAPLYTWWLD).

It belongs to the PlsY family. As to quaternary structure, probably interacts with PlsX.

It localises to the cell inner membrane. It catalyses the reaction an acyl phosphate + sn-glycerol 3-phosphate = a 1-acyl-sn-glycero-3-phosphate + phosphate. It participates in lipid metabolism; phospholipid metabolism. Functionally, catalyzes the transfer of an acyl group from acyl-phosphate (acyl-PO(4)) to glycerol-3-phosphate (G3P) to form lysophosphatidic acid (LPA). This enzyme utilizes acyl-phosphate as fatty acyl donor, but not acyl-CoA or acyl-ACP. The polypeptide is Glycerol-3-phosphate acyltransferase (Shewanella sp. (strain ANA-3)).